The primary structure comprises 54 residues: UPF0391 membrane protein Tbd_2238 (54 aa).

The next 2 membrane-spanning stretches (helical) occupy residues 5–25 (ALVFFIIAIVAAVFGFSGIAA) and 28–48 (VGIAKILFVVFLIMAIATFVV).

It belongs to the UPF0391 family.

The protein resides in the cell membrane. The sequence is that of UPF0391 membrane protein Tbd_2238 from Thiobacillus denitrificans (strain ATCC 25259 / T1).